The following is a 386-amino-acid chain: Patatin-16 (386 aa).

The first 23 residues, M1 to A23, serve as a signal peptide directing secretion. The PNPLA domain maps to L32–V229. The GXGXXG motif lies at G36–G41. Positions G75 to G79 match the GXSXG motif. The Nucleophile role is filled by S77. N115 carries N-linked (GlcNAc...) asparagine glycosylation. The active-site Proton acceptor is D215. The short motif at D215–A217 is the DGA/G element. Residues E360–A384 adopt a coiled-coil conformation.

It belongs to the patatin family.

The protein resides in the vacuole. Its function is as follows. Probable lipolytic acyl hydrolase (LAH), an activity which is thought to be involved in the response of tubers to pathogens. This is Patatin-16 from Solanum tuberosum (Potato).